The following is a 216-amino-acid chain: MAEALLPLPRRLVVTASTPACSSASSSTSPSPHCLLSRANPRPPRLAAPSPPRHRRLKAHAAVSDKSEQPKWWEKNAGPNMIDIHSTQEFLDALRDAGDRLVIVEFYGTWCGSCRALFPRLCRTAVENPDILFLKVNFDENKPMCKRLNVKVLPYFHFYRGADGQLEAFSCSLAKFQKLKDAIAVHNTARCSIGPPVGVGDVLDSPEEKPAEASPR.

The N-terminal 58 residues, 1-58 (MAEALLPLPRRLVVTASTPACSSASSSTSPSPHCLLSRANPRPPRLAAPSPPRHRRLK), are a transit peptide targeting the chloroplast. Over residues 19–40 (PACSSASSSTSPSPHCLLSRAN) the composition is skewed to low complexity. Positions 19–70 (PACSSASSSTSPSPHCLLSRANPRPPRLAAPSPPRHRRLKAHAAVSDKSEQP) are disordered. Residues 41 to 51 (PRPPRLAAPSP) are compositionally biased toward pro residues. A Thioredoxin domain is found at 61–188 (AAVSDKSEQP…LKDAIAVHNT (128 aa)). Catalysis depends on nucleophile residues C111 and C114. C111 and C114 are joined by a disulfide.

Belongs to the thioredoxin family.

It localises to the plastid. Its subcellular location is the chloroplast. In terms of biological role, probable thiol-disulfide oxidoreductase that may participate in various redox reactions. This Oryza sativa subsp. japonica (Rice) protein is Thioredoxin-like 2, chloroplastic.